A 257-amino-acid polypeptide reads, in one-letter code: Glucosamine-6-phosphate deaminase (257 aa).

Asp-64 serves as the catalytic Proton acceptor; for enolization step. Asn-133 (for ring-opening step) is an active-site residue. His-135 functions as the Proton acceptor; for ring-opening step in the catalytic mechanism. Glu-140 (for ring-opening step) is an active-site residue.

The protein belongs to the glucosamine/galactosamine-6-phosphate isomerase family. NagB subfamily.

It catalyses the reaction alpha-D-glucosamine 6-phosphate + H2O = beta-D-fructose 6-phosphate + NH4(+). It participates in amino-sugar metabolism; N-acetylneuraminate degradation; D-fructose 6-phosphate from N-acetylneuraminate: step 5/5. In terms of biological role, catalyzes the reversible isomerization-deamination of glucosamine 6-phosphate (GlcN6P) to form fructose 6-phosphate (Fru6P) and ammonium ion. The chain is Glucosamine-6-phosphate deaminase from Corynebacterium urealyticum (strain ATCC 43042 / DSM 7109).